Consider the following 435-residue polypeptide: Chromatin structure-remodeling complex subunit RSC7 (435 aa).

A disordered region spans residues 1 to 97 (MSDSEGGLAS…DKGVTRSRNR (97 aa)). Residues 30–66 (DTEDLDIDENDENEDDDYREEEANEGVNEEEISDEEE) are compositionally biased toward acidic residues. Serine 86 is modified (phosphoserine). The functional region; able to complement all NPL6 null allele phenotypes stretch occupies residues 248–435 (ELRTKGNVIE…QNFEKCNEYI (188 aa)).

It belongs to the RSC7/SWP82 family. RSC7 subfamily. Interacts with ARP7, ARP9, RSC3, RSC8, RSC30 and STH1. Component of the two forms of the RSC complex composed of at least either RSC1 or RSC2, and ARP7, ARP9, LDB7, NPL6, RSC3, RSC30, RSC4, RSC58, RSC6, RSC8, RSC9, SFH1, STH1, HTL1 and probably RTT102. The complexes interact with histone and histone variant components of centromeric chromatin. Component of a fungal-specific module (HTL1-LDB7-NPL6-RSC3-RSC30) within the RSC complex.

It is found in the nucleus. Component of the chromatin structure remodeling complex (RSC), which is involved in transcription regulation and nucleosome positioning. RSC is responsible for the transfer of a histone octamer from a nucleosome core particle to naked DNA. The reaction requires ATP and involves an activated RSC-nucleosome intermediate. Remodeling reaction also involves DNA translocation, DNA twist and conformational change. As a reconfigurer of centromeric and flanking nucleosomes, RSC complex is required both for proper kinetochore function in chromosome segregation and, via a PKC1-dependent signaling pathway, for organization of the cellular cytoskeleton. Together with HTL1, LDB7, RSC3, RSC30 components, defines a fungal-specific module within the RSC complex that plays a role in many cellular functions including the maintenance of cell wall integrity. Acidic protein important for nuclear protein localization. This is Chromatin structure-remodeling complex subunit RSC7 (NPL6) from Saccharomyces cerevisiae (strain ATCC 204508 / S288c) (Baker's yeast).